The sequence spans 169 residues: Peptide methionine sulfoxide reductase MsrA (169 aa).

The active site involves Cys11.

This sequence belongs to the MsrA Met sulfoxide reductase family.

It carries out the reaction L-methionyl-[protein] + [thioredoxin]-disulfide + H2O = L-methionyl-(S)-S-oxide-[protein] + [thioredoxin]-dithiol. The enzyme catalyses [thioredoxin]-disulfide + L-methionine + H2O = L-methionine (S)-S-oxide + [thioredoxin]-dithiol. Has an important function as a repair enzyme for proteins that have been inactivated by oxidation. Catalyzes the reversible oxidation-reduction of methionine sulfoxide in proteins to methionine. In Leifsonia xyli subsp. xyli (strain CTCB07), this protein is Peptide methionine sulfoxide reductase MsrA.